We begin with the raw amino-acid sequence, 247 residues long: Adiponectin (247 aa).

Residues Met-1 to Ala-17 form the signal peptide. O-linked (GalNAc...) threonine glycosylation is found at Thr-23 and Thr-24. Lys-36 is subject to 5-hydroxylysine. The residue at position 39 (Cys-39) is an S-(2-succinyl)cysteine. Residues Ala-44–Gly-105 form a disordered region. The 66-residue stretch at Gly-45–Ala-110 folds into the Collagen-like domain. 4-hydroxyproline is present on residues Pro-47, Pro-50, and Pro-56. Residues Arg-58–Asp-73 show a composition bias toward basic and acidic residues. Residues Lys-68, Lys-71, and Lys-80 each carry the 5-hydroxylysine; alternate modification. O-linked (Gal...) hydroxylysine; alternate glycans are attached at residues Lys-68, Lys-71, and Lys-80. The residue at position 94 (Pro-94) is a 4-hydroxyproline. At Lys-104 the chain carries 5-hydroxylysine; alternate. An O-linked (Gal...) hydroxylysine; alternate glycan is attached at Lys-104. A C1q domain is found at Ala-111–Asn-247.

As to quaternary structure, homomultimer. Forms trimers, hexamers and 12- to 18-mers. The trimers (low molecular weight complexes / LMW) are assembled via non-covalent interactions of the collagen-like domains in a triple helix and hydrophobic interactions within the globular C1q domain. Several trimers can associate to form disulfide-linked hexamers (middle molecular weight complexes / MMW) and larger complexes (higher molecular weight / HMW). The HMW-complex assembly is also modulated by the degree of lysine hydroxylation and glycosylation. LMW, MMW and HMW complexes bind to HBEGF, MMW and HMW complexes bind to PDGFB, and HMW complex binds to FGF2. Interacts with CTRP9 via the C1q domain (heterotrimeric complex). Post-translationally, HMW complexes are more extensively glycosylated than smaller oligomers. Hydroxylation and glycosylation of the lysine residues within the collagen-like domain of adiponectin seem to be critically involved in regulating the formation and/or secretion of HMW complexes and consequently contribute to the insulin-sensitizing activity of adiponectin in hepatocytes. In terms of processing, O-glycosylated. Not N-glycosylated O-linked glycans on hydroxylysine residues consist of Glc-Gal disaccharides bound to the oxygen atom of post-translationally added hydroxyl groups. O-linked glycosylation in the N-terminal is disialylated with the structure Neu5Acalpha2-&gt;8Neu5Acalpha2-&gt;3Gal. Sialylated by alpha 2,8-sialyltransferase III. Succination of Cys-39 by the Krebs cycle intermediate fumarate, which leads to S-(2-succinyl)cysteine residues, inhibits polymerization and secretion of adiponectin. Adiponectin is a major target for succination in both adipocytes and adipose tissue of diabetic mice. It was proposed that succination of proteins is a biomarker of mitochondrial stress and accumulation of Krebs cycle intermediates in adipose tissue in diabetes and that succination of adiponectin may contribute to the decrease in plasma adiponectin in diabetes. As to expression, synthesized exclusively by adipocytes and secreted into plasma.

The protein resides in the secreted. Its activity is regulated as follows. Polymerization and secretion of adiponectin is inhibited by succination of cysteine residues by the Krebs cycle intermediate fumarate, which leads to S-(2-succinyl)cysteine residues. Important adipokine involved in the control of fat metabolism and insulin sensitivity, with direct anti-diabetic, anti-atherogenic and anti-inflammatory activities. Stimulates AMPK phosphorylation and activation in the liver and the skeletal muscle, enhancing glucose utilization and fatty-acid combustion. Antagonizes TNF-alpha by negatively regulating its expression in various tissues such as liver and macrophages, and also by counteracting its effects. Inhibits endothelial NF-kappa-B signaling through a cAMP-dependent pathway. May play a role in cell growth, angiogenesis and tissue remodeling by binding and sequestering various growth factors with distinct binding affinities, depending on the type of complex, LMW, MMW or HMW. This chain is Adiponectin (Adipoq), found in Mus musculus (Mouse).